A 231-amino-acid chain; its full sequence is NKG2-C type II integral membrane protein (231 aa).

Polar residues predominate over residues 1-12 (MNKQRGTFSEVS). Residues 1 to 32 (MNKQRGTFSEVSLAQDPKRQQRKPKGNKSSIS) form a disordered region. Over 1–70 (MNKQRGTFSE…CQGLLPPPEK (70 aa)) the chain is Cytoplasmic. The helical; Signal-anchor for type II membrane protein transmembrane segment at 71–93 (LTAEVLGIICIVLMATVLKTIVL) threads the bilayer. At 94-231 (IPFLEQNNFS…SMIYHCKHKL (138 aa)) the chain is on the extracellular side. An N-linked (GlcNAc...) asparagine glycan is attached at Asn100. One can recognise a C-type lectin domain in the interval 116–229 (HCPEEWITYS…GSSMIYHCKH (114 aa)). Disulfide bonds link Cys117–Cys128, Cys145–Cys227, and Cys206–Cys219. N-linked (GlcNAc...) asparagine glycosylation is found at Asn149 and Asn178.

In terms of assembly, heterodimer with KLRD1; disulfide-linked. KLRD1-KLRC2 receptor complex interacts with TYROBP homodimer; this interaction is necessary for the expression on the cell surface. KLRD1-KLRC2 receptor complex can bind with low affinity to HLA-E loaded with self-peptides derived from the signal sequence of classical MHC class Ia. In terms of tissue distribution, expressed in NK cell subsets, in particular in adaptive CD57-positive NK cells (at protein level). Expressed in terminally differentiated cytotoxic gamma-delta T cells (at protein level). Expressed in alpha-beta T cells subsets (at protein level). KLRD1-KLRC1 and KLRD1-KLRC2 are differentially expressed within NK and T cell populations, with only minor subsets expressing both receptor complexes (at protein level).

It is found in the cell membrane. Its function is as follows. Immune activating receptor involved in self-nonself discrimination. In complex with KLRD1 on cytotoxic lymphocyte subsets, recognizes non-classical major histocompatibility (MHC) class Ib HLA-E loaded with signal sequence-derived peptides from non-classical MHC class Ib HLA-G molecules, likely playing a role in the generation and effector functions of adaptive natural killer (NK) cells and in maternal-fetal tolerance during pregnancy. Regulates the effector functions of terminally differentiated cytotoxic lymphocyte subsets, and in particular may play a role in adaptive NK cell response to viral infection. Upon HLA-E-peptide binding, transmits intracellular signals via the adapter protein TYROBP/DAP12, triggering the phosphorylation of proximal signaling molecules and cell activation. The protein is NKG2-C type II integral membrane protein (KLRC2) of Homo sapiens (Human).